The sequence spans 373 residues: Bifunctional enzyme IspD/IspF (373 aa).

The 2-C-methyl-D-erythritol 4-phosphate cytidylyltransferase stretch occupies residues 1-213 (MSDLTLVLLG…CLQKPSATKR (213 aa)). The segment at 213 to 373 (RIGNGLDVHA…TLHYFDWSEI (161 aa)) is 2-C-methyl-D-erythritol 2,4-cyclodiphosphate synthase. A divalent metal cation contacts are provided by aspartate 219 and histidine 221. Residues 219-221 (DVH) and 245-246 (HS) each bind 4-CDP-2-C-methyl-D-erythritol 2-phosphate. A divalent metal cation is bound at residue histidine 253. 4-CDP-2-C-methyl-D-erythritol 2-phosphate contacts are provided by residues 267-269 (DIG), 272-276 (FPDSD), 343-346 (TTTE), phenylalanine 350, and arginine 353.

It in the N-terminal section; belongs to the IspD/TarI cytidylyltransferase family. IspD subfamily. The protein in the C-terminal section; belongs to the IspF family. A divalent metal cation is required as a cofactor.

It carries out the reaction 2-C-methyl-D-erythritol 4-phosphate + CTP + H(+) = 4-CDP-2-C-methyl-D-erythritol + diphosphate. It catalyses the reaction 4-CDP-2-C-methyl-D-erythritol 2-phosphate = 2-C-methyl-D-erythritol 2,4-cyclic diphosphate + CMP. Its pathway is isoprenoid biosynthesis; isopentenyl diphosphate biosynthesis via DXP pathway; isopentenyl diphosphate from 1-deoxy-D-xylulose 5-phosphate: step 2/6. It functions in the pathway isoprenoid biosynthesis; isopentenyl diphosphate biosynthesis via DXP pathway; isopentenyl diphosphate from 1-deoxy-D-xylulose 5-phosphate: step 4/6. Its function is as follows. Bifunctional enzyme that catalyzes the formation of 4-diphosphocytidyl-2-C-methyl-D-erythritol from CTP and 2-C-methyl-D-erythritol 4-phosphate (MEP) (IspD), and catalyzes the conversion of 4-diphosphocytidyl-2-C-methyl-D-erythritol 2-phosphate (CDP-ME2P) to 2-C-methyl-D-erythritol 2,4-cyclodiphosphate (ME-CPP) with a corresponding release of cytidine 5-monophosphate (CMP) (IspF). The protein is Bifunctional enzyme IspD/IspF of Nitratiruptor sp. (strain SB155-2).